The primary structure comprises 602 residues: Transcription termination factor Rho (602 aa).

2 disordered regions span residues 1 to 35 (MTDT…EPAG) and 76 to 216 (ANGA…AEAE). Positions 85–96 (SAQEHDKGDRPP) are enriched in basic and acidic residues. A compositionally biased stretch (polar residues) spans 100 to 120 (APATQGEQTPTEQIDSQSQQV). Positions 172 to 182 (GDQQASGGQQA) are enriched in low complexity. The segment covering 183 to 192 (RGDEDGEARQ) has biased composition (basic and acidic residues). Basic residues predominate over residues 193-206 (GRRGRRFRDRRRRG). Residues 223-301 (VQPVAGILDV…VRLDSINGGS (79 aa)) form the Rho RNA-BD domain. Residues 344 to 349 (GKGQRA), 356 to 361 (KAGKTT), and R387 contribute to the ATP site.

This sequence belongs to the Rho family. As to quaternary structure, homohexamer. The homohexamer assembles into an open ring structure.

Functionally, facilitates transcription termination by a mechanism that involves Rho binding to the nascent RNA, activation of Rho's RNA-dependent ATPase activity, and release of the mRNA from the DNA template. The sequence is that of Transcription termination factor Rho from Mycobacterium bovis (strain ATCC BAA-935 / AF2122/97).